A 413-amino-acid chain; its full sequence is Multidrug resistance protein MdtA (413 aa).

The signal sequence occupies residues 1 to 20 (MKGSNTFRWAIAIGVVVAAA). Disordered regions lie at residues 31-57 (SPTAAPGVAAQAPHTAAAGRRGMRDGP) and 391-413 (EPQTTMADEKSPSRHEGQKGARA). A compositionally biased stretch (basic and acidic residues) spans 397–413 (ADEKSPSRHEGQKGARA).

This sequence belongs to the membrane fusion protein (MFP) (TC 8.A.1) family. Part of a tripartite efflux system composed of MdtA, MdtB and MdtC.

The protein localises to the cell inner membrane. The polypeptide is Multidrug resistance protein MdtA (Salmonella paratyphi C (strain RKS4594)).